The chain runs to 201 residues: CDP-diacylglycerol--serine O-phosphatidyltransferase (201 aa).

The next 6 membrane-spanning stretches (helical) occupy residues 19–39, 57–77, 88–108, 112–132, 133–153, and 162–182; these read IITGLLAILLNSFSLIYLSII, FGAELDSISDVVSFGVAPAYL, LISAIIFCLCGALRLARFGIL, GFIGLPIPAGALLLVGFCQLI, NSYLINSILAILIGLLMISDI, and IFIYIFAVSLCLAIVGIPHFA.

Belongs to the CDP-alcohol phosphatidyltransferase class-I family.

It is found in the cell membrane. It carries out the reaction a CDP-1,2-diacyl-sn-glycerol + L-serine = a 1,2-diacyl-sn-glycero-3-phospho-L-serine + CMP + H(+). This chain is CDP-diacylglycerol--serine O-phosphatidyltransferase (pssA), found in Methanocaldococcus jannaschii (strain ATCC 43067 / DSM 2661 / JAL-1 / JCM 10045 / NBRC 100440) (Methanococcus jannaschii).